The chain runs to 153 residues: Satratoxin biosynthesis SC2 cluster transcription factor SAT15 (153 aa).

It localises to the nucleus. In terms of biological role, transcriptional regulator that may regulate the expression of the satratoxin biosynthesis SC2 cluster, one of the 3 clusters involved in the biosynthesis of satratoxins, trichothecene mycotoxins that are associated with human food poisonings. This chain is Satratoxin biosynthesis SC2 cluster transcription factor SAT15, found in Stachybotrys chartarum (strain CBS 109288 / IBT 7711) (Toxic black mold).